The following is a 902-amino-acid chain: 4-hydroxyphenylacetate decarboxylase glycyl radical subunit (902 aa).

A PFL domain is found at K38 to L774. 4-hydroxyphenylacetate is bound by residues S348 and C507. Residue C507 is the Cysteine radical intermediate of the active site. The active-site Proton donor is E509. 2 residues coordinate 4-hydroxyphenylacetate: H540 and E641. The region spanning G782–V902 is the Glycine radical domain. G877 carries the glycine radical modification.

Belongs to the glycyl radical enzyme (GRE) family. HPAD subfamily. In terms of assembly, heterooctamer consisting of 4 large (HpdB) subunits and 4 small (HpdC) subunits, arranged as a tetramer of heterodimers. Also forms a catalytically inactive homodimer. Requires the activating protein CsdA to generate the key active site glycyl radical that is involved in catalysis. In terms of processing, phosphorylated on serine. Phosphorylation may trigger the formation of the active heterooctamers and thereby regulates enzyme activity.

The enzyme catalyses 4-hydroxyphenylacetate + H(+) = 4-methylphenol + CO2. The catalysed reaction is 3,4-dihydroxyphenylacetate + H(+) = 4-methylcatechol + CO2. Functionally, glycyl radical subunit of the HPA decarboxylase that decarboxylates phenylacetates with a hydroxyl group in the p-position. Active toward 4-hydroxyphenylacetate and 3,4-dihydroxyphenylacetate, forming 4-methylphenol and 4-methylcatechol, respectively. Is likely involved in the catabolism of aromatic amino acids such as tyrosine fermentation. 4-methylphenol (p-cresol) formation provides metabolic toxicity, which allows an active suppression of other microbes and may provide growth advantages for the producers in highly competitive environments. The large subunit is the catalytic subunit that binds the substrate. The chain is 4-hydroxyphenylacetate decarboxylase glycyl radical subunit from Clostridioides difficile (strain 630) (Peptoclostridium difficile).